Reading from the N-terminus, the 1575-residue chain is Ras GTPase-activating-like protein IQGAP2 (1575 aa).

A Phosphoserine modification is found at Ser16. The region spanning 41–156 (LCHLEEAKRW…YCIHALSLYL (116 aa)) is the Calponin-homology (CH) domain. Phosphothreonine is present on Thr356. The WW domain occupies 594-627 (VSSDGSWLKLNLHKKYDYYYNTDSKESSWVTPES). Residues Ser595, Ser599, and Ser685 each carry the phosphoserine modification. IQ domains follow at residues 690–719 (QEEN…TFID), 720–749 (NTDS…YFRD), and 750–779 (HNNE…SENP). The residue at position 716 (Thr716) is a Phosphothreonine. Residues Thr782, Thr881, Thr1002, and Thr1269 each carry the phosphothreonine modification. In terms of domain architecture, Ras-GAP spans 933–1182 (YLLLKLFKTA…QEFRKYFKEA (250 aa)). 4 positions are modified to phosphoserine: Ser1271, Ser1279, Ser1358, and Ser1461.

In terms of tissue distribution, isoform 2 expression is enhanced in testis.

Binds to activated CDC42 and RAC1 but does not seem to stimulate their GTPase activity. Associates with calmodulin. This is Ras GTPase-activating-like protein IQGAP2 (IQGAP2) from Homo sapiens (Human).